We begin with the raw amino-acid sequence, 367 residues long: Leu/Ile/Val-binding protein (367 aa).

The N-terminal stretch at M1–A23 is a signal peptide. An intrachain disulfide couples C76 to C101.

It belongs to the leucine-binding protein family.

Its subcellular location is the periplasm. Functionally, this protein is a component of the leucine, isoleucine, valine, (threonine) transport system, which is one of the two periplasmic binding protein-dependent transport systems of the high-affinity transport of the branched-chain amino acids. This is Leu/Ile/Val-binding protein (livJ) from Citrobacter freundii.